A 308-amino-acid polypeptide reads, in one-letter code: Isochorismatase domain-containing protein 1 (308 aa).

Belongs to the isochorismatase family.

The polypeptide is Isochorismatase domain-containing protein 1 (isoc1) (Xenopus tropicalis (Western clawed frog)).